The primary structure comprises 476 residues: Mitochondrial-processing peptidase subunit beta (476 aa).

A mitochondrion-targeting transit peptide spans 1-28 (MASRRLALNLAQGVKARAGGVINPFRRG). His84 is a binding site for Zn(2+). Glu87 functions as the Proton acceptor in the catalytic mechanism. Zn(2+) contacts are provided by His88 and Glu164.

The protein belongs to the peptidase M16 family. As to quaternary structure, heterodimer of mpp (alpha) and pep (beta) subunits, forming the mitochondrial processing protease (MPP) in which mpp is involved in substrate recognition and binding and pep is the catalytic subunit. Component of the ubiquinol-cytochrome c oxidoreductase (cytochrome b-c1 complex, complex III, CIII), a multisubunit enzyme composed of 10 subunits. The complex is composed of 3 respiratory subunits cytochrome b (cob), cytochrome c1 (cyt-1) and Rieske protein (fes-1), 2 core protein subunits pep and ucr-1, and 5 low-molecular weight protein subunits qcr6, qcr7, qcr8, qcr9 and probably NCU16844/qcr10. The complex exists as an obligatory dimer and forms supercomplexes (SCs) in the inner mitochondrial membrane with NADH-ubiquinone oxidoreductase (complex I, CI) and cytochrome c oxidase (complex IV, CIV), resulting in different assemblies (supercomplexes SCI(1)III(2), SCIII(2)IV(1) and SCIII(2)IV(2) as well as higher order I(x)III(y)IV(z) megacomplexes). Zn(2+) serves as cofactor.

It is found in the mitochondrion matrix. The protein localises to the mitochondrion inner membrane. The enzyme catalyses Release of N-terminal transit peptides from precursor proteins imported into the mitochondrion, typically with Arg in position P2.. With respect to regulation, binding to mpp is required for catalytic activity. Inhibited by metal chelator ethylenediaminetetraacetic acid (EDTA). Catalytic subunit of the essential mitochondrial processing protease (MPP), which cleaves the mitochondrial sequence off newly imported precursors proteins. Preferentially, cleaves after an arginine at position P2. Its function is as follows. Component of the ubiquinol-cytochrome c oxidoreductase, a multisubunit transmembrane complex that is part of the mitochondrial electron transport chain which drives oxidative phosphorylation. The respiratory chain contains 3 multisubunit complexes succinate dehydrogenase (complex II, CII), ubiquinol-cytochrome c oxidoreductase (cytochrome b-c1 complex, complex III, CIII) and cytochrome c oxidase (complex IV, CIV), that cooperate to transfer electrons derived from NADH and succinate to molecular oxygen, creating an electrochemical gradient over the inner membrane that drives transmembrane transport and the ATP synthase. The cytochrome b-c1 complex catalyzes electron transfer from ubiquinol to cytochrome c, linking this redox reaction to translocation of protons across the mitochondrial inner membrane, with protons being carried across the membrane as hydrogens on the quinol. In the process called Q cycle, 2 protons are consumed from the matrix, 4 protons are released into the intermembrane space and 2 electrons are passed to cytochrome c. The chain is Mitochondrial-processing peptidase subunit beta from Neurospora crassa (strain ATCC 24698 / 74-OR23-1A / CBS 708.71 / DSM 1257 / FGSC 987).